We begin with the raw amino-acid sequence, 152 residues long: uncharacterized protein (152 aa).

The first 24 residues, 1–24 (MRKMLAYTLYIVTYLTYIMNEVEC), serve as a signal peptide directing secretion.

This is an uncharacterized protein from Acheta domesticus (House cricket).